A 198-amino-acid polypeptide reads, in one-letter code: Proteasome subunit beta type-4 (198 aa).

N-acetylmethionine is present on Met-1. Ser-76 carries the phosphoserine modification.

The protein belongs to the peptidase T1B family. As to quaternary structure, the 26S proteasome consists of a 20S proteasome core and two 19S regulatory subunits. The 20S proteasome core is composed of 28 subunits that are arranged in four stacked rings, resulting in a barrel-shaped structure. The two end rings are each formed by seven alpha subunits, and the two central rings are each formed by seven beta subunits. The catalytic chamber with the active sites is on the inside of the barrel.

It localises to the cytoplasm. The protein localises to the nucleus. Functionally, non-catalytic component of the proteasome which degrades poly-ubiquitinated proteins in the cytoplasm and in the nucleus. It is essential for the regulated turnover of proteins and for the removal of misfolded proteins. The proteasome is a multicatalytic proteinase complex that is characterized by its ability to cleave peptides with Arg, Phe, Tyr, Leu, and Glu adjacent to the leaving group at neutral or slightly basic pH. It has an ATP-dependent proteolytic activity. This subunit has a chymotrypsin-like activity. The polypeptide is Proteasome subunit beta type-4 (PRE1) (Saccharomyces cerevisiae (strain ATCC 204508 / S288c) (Baker's yeast)).